Reading from the N-terminus, the 275-residue chain is Membrane protein insertase YidC 1 (275 aa).

Positions 1 to 25 are cleaved as a signal peptide; the sequence is MRKVLRVKKNIKIARIVPLVLLLVA. Residue C26 is the site of N-palmitoyl cysteine attachment. C26 carries the S-diacylglycerol cysteine lipid modification. A run of 5 helical transmembrane segments spans residues 58-78, 129-149, 171-191, 198-216, and 222-240; these read SIGVGIILFTLTIRLMLMPLF, YASLLPLLIQMPVMIALFQAL, LYLLPVLAAVFTFLSTWLTNL, VMMTVMIYVMPLMIFFMGF, and VVLYWTVSNAFQVVQLLLL.

Belongs to the OXA1/ALB3/YidC family. Type 2 subfamily.

It is found in the cell membrane. In terms of biological role, required for the insertion and/or proper folding and/or complex formation of integral membrane proteins into the membrane. Involved in integration of membrane proteins that insert both dependently and independently of the Sec translocase complex, as well as at least some lipoproteins. In Streptococcus pyogenes serotype M6 (strain ATCC BAA-946 / MGAS10394), this protein is Membrane protein insertase YidC 1.